Here is a 185-residue protein sequence, read N- to C-terminus: Prorelaxin (185 aa).

The first 24 residues, 1–24 (MPRLFLFHLLGVCLLLNQFSRAVA), serve as a signal peptide directing secretion. Intrachain disulfides connect cysteine 35/cysteine 172, cysteine 47/cysteine 185, and cysteine 171/cysteine 176. Residues 56-157 (SLNQEDAPLK…LRSLGLDTHS (102 aa)) constitute a propeptide, connecting peptide.

This sequence belongs to the insulin family. As to quaternary structure, heterodimer of a B chain and an A chain linked by two disulfide bonds.

It localises to the secreted. Its function is as follows. Relaxin is an ovarian hormone that acts with estrogen to produce dilatation of the birth canal in many mammals. May be involved in remodeling of connective tissues during pregnancy, promoting growth of pubic ligaments and ripening of the cervix. The protein is Prorelaxin (RLN) of Macaca mulatta (Rhesus macaque).